The following is a 430-amino-acid chain: 5-methylthioadenosine/S-adenosylhomocysteine deaminase (430 aa).

Residues histidine 59 and histidine 61 each coordinate Zn(2+). Positions 88 and 181 each coordinate substrate. Histidine 208 provides a ligand contact to Zn(2+). Residues glutamate 211 and aspartate 296 each coordinate substrate. Aspartate 296 provides a ligand contact to Zn(2+).

This sequence belongs to the metallo-dependent hydrolases superfamily. MTA/SAH deaminase family. Zn(2+) serves as cofactor.

The catalysed reaction is S-adenosyl-L-homocysteine + H2O + H(+) = S-inosyl-L-homocysteine + NH4(+). It carries out the reaction S-methyl-5'-thioadenosine + H2O + H(+) = S-methyl-5'-thioinosine + NH4(+). In terms of biological role, catalyzes the deamination of 5-methylthioadenosine and S-adenosyl-L-homocysteine into 5-methylthioinosine and S-inosyl-L-homocysteine, respectively. Is also able to deaminate adenosine. The sequence is that of 5-methylthioadenosine/S-adenosylhomocysteine deaminase from Aquifex aeolicus (strain VF5).